A 373-amino-acid polypeptide reads, in one-letter code: 3-dehydroquinate synthase (373 aa).

Residues 67–72, 101–105, 125–126, lysine 138, and lysine 147 contribute to the NAD(+) site; these read EGEETK, GVILD, and TT. Zn(2+)-binding residues include glutamate 180, histidine 240, and histidine 256.

The protein belongs to the sugar phosphate cyclases superfamily. Dehydroquinate synthase family. NAD(+) is required as a cofactor. Requires Co(2+) as cofactor. It depends on Zn(2+) as a cofactor.

It localises to the cytoplasm. It catalyses the reaction 7-phospho-2-dehydro-3-deoxy-D-arabino-heptonate = 3-dehydroquinate + phosphate. It participates in metabolic intermediate biosynthesis; chorismate biosynthesis; chorismate from D-erythrose 4-phosphate and phosphoenolpyruvate: step 2/7. Catalyzes the conversion of 3-deoxy-D-arabino-heptulosonate 7-phosphate (DAHP) to dehydroquinate (DHQ). This Chlamydia trachomatis serovar A (strain ATCC VR-571B / DSM 19440 / HAR-13) protein is 3-dehydroquinate synthase.